A 331-amino-acid chain; its full sequence is HPr kinase/phosphorylase (331 aa).

Residues His153 and Lys174 contribute to the active site. 168-175 provides a ligand contact to ATP; it reads GKSGLGKS. Mg(2+) is bound at residue Ser175. The active-site Proton acceptor; for phosphorylation activity. Proton donor; for dephosphorylation activity is Asp192. The segment at 217–226 is important for the catalytic mechanism of both phosphorylation and dephosphorylation; sequence MEIRGLGVVD. Glu218 is a binding site for Mg(2+). Arg259 is an active-site residue. Residues 280-285 are important for the catalytic mechanism of dephosphorylation; the sequence is PIFPGK.

Belongs to the HPrK/P family. Homohexamer. Mg(2+) serves as cofactor.

The catalysed reaction is [HPr protein]-L-serine + ATP = [HPr protein]-O-phospho-L-serine + ADP + H(+). The enzyme catalyses [HPr protein]-O-phospho-L-serine + phosphate + H(+) = [HPr protein]-L-serine + diphosphate. In terms of biological role, catalyzes the ATP- as well as the pyrophosphate-dependent phosphorylation of a specific serine residue in HPr, a phosphocarrier protein of the phosphoenolpyruvate-dependent sugar phosphotransferase system (PTS). HprK/P also catalyzes the pyrophosphate-producing, inorganic phosphate-dependent dephosphorylation (phosphorolysis) of seryl-phosphorylated HPr (P-Ser-HPr). The sequence is that of HPr kinase/phosphorylase from Pelodictyon phaeoclathratiforme (strain DSM 5477 / BU-1).